The primary structure comprises 1418 residues: Transcriptional regulator ADR1 (1418 aa).

Composition is skewed to low complexity over residues 34–44 (TTTTANMSNTT) and 68–93 (TSMS…TTTS). The disordered stretch occupies residues 34-96 (TTTTANMSNT…AATTTTSKKS (63 aa)). 2 consecutive C2H2-type zinc fingers follow at residues 117-139 (FVCQ…ERSH) and 145-168 (FSCG…QKLH). Disordered stretches follow at residues 181 to 285 (KSIK…LDQR), 403 to 426 (SQHG…RSES), 454 to 484 (VAAH…GLSR), 1132 to 1167 (NSNS…NNSN), and 1338 to 1362 (TNTN…NQHH). Residues 189–211 (GDDDDDDDDDDEEMANSEDENDH) are compositionally biased toward acidic residues. Positions 236 to 278 (NLFNSKQKPTKANTTKSKVAKLSTTTSRKNSTNPTRKNSSSLH) are enriched in polar residues. 3 stretches are compositionally biased toward low complexity: residues 462–477 (QQQQ…QPNQ), 1145–1167 (NEIN…NNSN), and 1338–1356 (TNTN…DNGT).

The protein localises to the nucleus. Transcription factor involved in the regulation of hyphal growth. This Candida albicans (strain SC5314 / ATCC MYA-2876) (Yeast) protein is Transcriptional regulator ADR1 (ADR1).